The following is a 426-amino-acid chain: 3-phosphoshikimate 1-carboxyvinyltransferase (426 aa).

3-phosphoshikimate-binding residues include K22, S23, and R27. A phosphoenolpyruvate-binding site is contributed by K22. G96 and R124 together coordinate phosphoenolpyruvate. Residues S170, S171, Q172, S198, D314, N337, and K341 each contribute to the 3-phosphoshikimate site. Residue Q172 coordinates phosphoenolpyruvate. Residue D314 is the Proton acceptor of the active site. Residues R345, R387, and K412 each coordinate phosphoenolpyruvate.

It belongs to the EPSP synthase family. As to quaternary structure, monomer.

It localises to the cytoplasm. The catalysed reaction is 3-phosphoshikimate + phosphoenolpyruvate = 5-O-(1-carboxyvinyl)-3-phosphoshikimate + phosphate. It participates in metabolic intermediate biosynthesis; chorismate biosynthesis; chorismate from D-erythrose 4-phosphate and phosphoenolpyruvate: step 6/7. In terms of biological role, catalyzes the transfer of the enolpyruvyl moiety of phosphoenolpyruvate (PEP) to the 5-hydroxyl of shikimate-3-phosphate (S3P) to produce enolpyruvyl shikimate-3-phosphate and inorganic phosphate. This Aliivibrio fischeri (strain MJ11) (Vibrio fischeri) protein is 3-phosphoshikimate 1-carboxyvinyltransferase.